Reading from the N-terminus, the 232-residue chain is 2,3,4,5-tetrahydropyridine-2,6-dicarboxylate N-acetyltransferase (232 aa).

It belongs to the transferase hexapeptide repeat family. DapH subfamily.

It catalyses the reaction (S)-2,3,4,5-tetrahydrodipicolinate + acetyl-CoA + H2O = L-2-acetamido-6-oxoheptanedioate + CoA. The protein operates within amino-acid biosynthesis; L-lysine biosynthesis via DAP pathway; LL-2,6-diaminopimelate from (S)-tetrahydrodipicolinate (acetylase route): step 1/3. Its function is as follows. Catalyzes the transfer of an acetyl group from acetyl-CoA to tetrahydrodipicolinate. The chain is 2,3,4,5-tetrahydropyridine-2,6-dicarboxylate N-acetyltransferase from Streptococcus suis (strain 98HAH33).